Consider the following 178-residue polypeptide: Endoribonuclease YbeY (178 aa).

Residues His118, His122, and His128 each coordinate Zn(2+). The interval 158 to 178 (ADRQSEKDRRLLDKSRYFDEP) is disordered.

Belongs to the endoribonuclease YbeY family. Zn(2+) serves as cofactor.

It is found in the cytoplasm. Its function is as follows. Single strand-specific metallo-endoribonuclease involved in late-stage 70S ribosome quality control and in maturation of the 3' terminus of the 16S rRNA. This chain is Endoribonuclease YbeY, found in Mycolicibacterium smegmatis (strain ATCC 700084 / mc(2)155) (Mycobacterium smegmatis).